The primary structure comprises 72 residues: Small ribosomal subunit protein eS31 (72 aa).

Residues Cys-32, Cys-35, Cys-51, and Cys-54 each coordinate Zn(2+). A C4-type zinc finger spans residues 32–54; it reads CPRCGSVMAYHKEPVPRWHCGKC.

It belongs to the eukaryotic ribosomal protein eS31 family. In terms of assembly, part of the 30S ribosomal subunit. It depends on Zn(2+) as a cofactor.

The sequence is that of Small ribosomal subunit protein eS31 from Caldivirga maquilingensis (strain ATCC 700844 / DSM 13496 / JCM 10307 / IC-167).